The following is a 194-amino-acid chain: uncharacterized protein (194 aa).

The region spanning 2–62 is the HTH tetR-type domain; it reads QGPRERMVVS…CEAVDYAGEH (61 aa). Residues 25 to 44 constitute a DNA-binding region (H-T-H motif); sequence AISDVLQHSGAPRGSAYHYF.

This is an uncharacterized protein from Mycobacterium tuberculosis (strain CDC 1551 / Oshkosh).